We begin with the raw amino-acid sequence, 615 residues long: 1-deoxy-D-xylulose-5-phosphate synthase (615 aa).

Thiamine diphosphate is bound by residues His-72 and 111–113 (GHS). A Mg(2+)-binding site is contributed by Asp-142. Thiamine diphosphate contacts are provided by residues 143-144 (GA), Asn-171, Tyr-278, and Glu-360. Asn-171 provides a ligand contact to Mg(2+).

It belongs to the transketolase family. DXPS subfamily. In terms of assembly, homodimer. The cofactor is Mg(2+). Requires thiamine diphosphate as cofactor.

The catalysed reaction is D-glyceraldehyde 3-phosphate + pyruvate + H(+) = 1-deoxy-D-xylulose 5-phosphate + CO2. It functions in the pathway metabolic intermediate biosynthesis; 1-deoxy-D-xylulose 5-phosphate biosynthesis; 1-deoxy-D-xylulose 5-phosphate from D-glyceraldehyde 3-phosphate and pyruvate: step 1/1. In terms of biological role, catalyzes the acyloin condensation reaction between C atoms 2 and 3 of pyruvate and glyceraldehyde 3-phosphate to yield 1-deoxy-D-xylulose-5-phosphate (DXP). In Campylobacter jejuni subsp. jejuni serotype O:2 (strain ATCC 700819 / NCTC 11168), this protein is 1-deoxy-D-xylulose-5-phosphate synthase.